A 337-amino-acid chain; its full sequence is Large ribosomal subunit protein uL3 (337 aa).

The disordered stretch occupies residues 1–29; the sequence is MPKINRPRRGSLAFSPRKRAQSPIPKYKS.

This sequence belongs to the universal ribosomal protein uL3 family. As to quaternary structure, part of the 50S ribosomal subunit. Forms a cluster with proteins L14 and L24e.

Its function is as follows. One of the primary rRNA binding proteins, it binds directly near the 3'-end of the 23S rRNA, where it nucleates assembly of the 50S subunit. The chain is Large ribosomal subunit protein uL3 from Methanoregula boonei (strain DSM 21154 / JCM 14090 / 6A8).